Consider the following 76-residue polypeptide: CLAVATA3/ESR (CLE)-related protein 46 (76 aa).

The N-terminal stretch at 1 to 26 (MRRHDIIIKLLLLMCLLLSRFVTREC) is a signal peptide. A disordered region spans residues 53–76 (EEKKWHKHPSGPNPTGNRHPPVKH). Hydroxyproline occurs at positions 61 and 64. P64 carries O-linked (Ara...) hydroxyproline glycosylation.

This sequence belongs to the CLV3/ESR signal peptide family. In terms of processing, the O-glycosylation (arabinosylation) of the hydroxyproline Pro-64 enhances binding affinity of the CLE46p peptide for its receptor.

The protein localises to the secreted. It is found in the extracellular space. Its function is as follows. Extracellular signal peptide that regulates cell fate. The polypeptide is CLAVATA3/ESR (CLE)-related protein 46 (Arabidopsis thaliana (Mouse-ear cress)).